We begin with the raw amino-acid sequence, 410 residues long: Na(+)-translocating NADH-quinone reductase subunit B (410 aa).

3 consecutive transmembrane segments (helical) span residues 56–76 (MMILVWLALFPAMFYGMYNVG), 119–139 (LFGAIYFLPIYATVFIVGGFW), and 159–179 (SILFALIVPPTLPLWQAALGI). Residue T232 is modified to FMN phosphoryl threonine. A run of 5 helical transmembrane segments spans residues 266–286 (GSIGEVSTLALLIGGAFIVFA), 293–313 (IIAGVMIGMIAMSSLFNFIGS), 318–338 (MFAMPWYWHLVVGGFAIGMLF), 347–367 (SFTNVGKWWYGALIGVMCVLI), and 377–397 (GMMLAILFANLFAPIFDYFVA).

This sequence belongs to the NqrB/RnfD family. As to quaternary structure, composed of six subunits; NqrA, NqrB, NqrC, NqrD, NqrE and NqrF. The cofactor is FMN.

The protein localises to the cell inner membrane. It carries out the reaction a ubiquinone + n Na(+)(in) + NADH + H(+) = a ubiquinol + n Na(+)(out) + NAD(+). NQR complex catalyzes the reduction of ubiquinone-1 to ubiquinol by two successive reactions, coupled with the transport of Na(+) ions from the cytoplasm to the periplasm. NqrA to NqrE are probably involved in the second step, the conversion of ubisemiquinone to ubiquinol. This chain is Na(+)-translocating NADH-quinone reductase subunit B, found in Neisseria meningitidis serogroup A / serotype 4A (strain DSM 15465 / Z2491).